A 313-amino-acid polypeptide reads, in one-letter code: 4-diphosphocytidyl-2-C-methyl-D-erythritol kinase (313 aa).

The active site involves Lys10. Pro95–Ser105 lines the ATP pocket. Asp136 is a catalytic residue. Positions His289–Thr313 are disordered. Residues Val292–Arg304 are compositionally biased toward low complexity.

It belongs to the GHMP kinase family. IspE subfamily.

The enzyme catalyses 4-CDP-2-C-methyl-D-erythritol + ATP = 4-CDP-2-C-methyl-D-erythritol 2-phosphate + ADP + H(+). The protein operates within isoprenoid biosynthesis; isopentenyl diphosphate biosynthesis via DXP pathway; isopentenyl diphosphate from 1-deoxy-D-xylulose 5-phosphate: step 3/6. Functionally, catalyzes the phosphorylation of the position 2 hydroxy group of 4-diphosphocytidyl-2C-methyl-D-erythritol. The sequence is that of 4-diphosphocytidyl-2-C-methyl-D-erythritol kinase from Anaeromyxobacter sp. (strain K).